Here is a 274-residue protein sequence, read N- to C-terminus: Large ribosomal subunit protein uL2 (274 aa).

The disordered stretch occupies residues 224-274; it reads VAMNPVDHPHGGGEGRTSGGRHPVTPWGIPTKGYKTRRNKRSNKLIVQKRK. The segment covering 257–274 has biased composition (basic residues); the sequence is YKTRRNKRSNKLIVQKRK.

It belongs to the universal ribosomal protein uL2 family. As to quaternary structure, part of the 50S ribosomal subunit. Forms a bridge to the 30S subunit in the 70S ribosome.

Functionally, one of the primary rRNA binding proteins. Required for association of the 30S and 50S subunits to form the 70S ribosome, for tRNA binding and peptide bond formation. It has been suggested to have peptidyltransferase activity; this is somewhat controversial. Makes several contacts with the 16S rRNA in the 70S ribosome. In Francisella tularensis subsp. holarctica (strain FTNF002-00 / FTA), this protein is Large ribosomal subunit protein uL2.